The following is a 605-amino-acid chain: Pescadillo homolog (605 aa).

The segment at 51 to 484 (KANKGSTAPT…GEEEESESES (434 aa)) is sufficient for interaction with ERB1. Serine 288 is modified (phosphoserine). Residues 294–342 (LKSALNADEANTDETEKEEEQEKKQEKEQEKEQNEETELDTFEDNNKNK) adopt a coiled-coil conformation. The segment at 297 to 342 (ALNADEANTDETEKEEEQEKKQEKEQEKEQNEETELDTFEDNNKNK) is disordered. A compositionally biased stretch (acidic residues) spans 303 to 312 (ANTDETEKEE). At threonine 308 the chain carries Phosphothreonine. Basic and acidic residues predominate over residues 313–327 (EQEKKQEKEQEKEQN). One can recognise a BRCT domain in the interval 355 to 449 (PVASLFSAFV…ELVPANKYLP (95 aa)). The disordered stretch occupies residues 459-605 (PWGDAIGYDP…AKLNKLDSKK (147 aa)). Over residues 473 to 510 (EEGEEEESESESESEDQVEEEDQEVVAGEEDDDDDEEL) the composition is skewed to acidic residues. Positions 530 to 605 (EADKDVNKSK…AKLNKLDSKK (76 aa)) form a coiled coil. Positions 562–571 (KQKKLYKKMK) are enriched in basic residues. A compositionally biased stretch (basic and acidic residues) spans 575-584 (AKKEEQAENL). The span at 585–598 (KKKKKQIAKQKAKL) shows a compositional bias: basic residues.

This sequence belongs to the pescadillo family. As to quaternary structure, component of the NOP7 complex, composed of ERB1, NOP7 and YTM1. The complex is held together by ERB1, which interacts with NOP7 via its N-terminal domain and with YTM1 via a high-affinity interaction between the seven-bladed beta-propeller domains of the 2 proteins. The NOP7 complex associates with the 66S pre-ribosome.

It localises to the nucleus. The protein resides in the nucleolus. It is found in the nucleoplasm. Its function is as follows. Component of the NOP7 complex, which is required for maturation of the 25S and 5.8S ribosomal RNAs and formation of the 60S ribosome. In Saccharomyces cerevisiae (strain YJM789) (Baker's yeast), this protein is Pescadillo homolog.